The following is a 342-amino-acid chain: Trans-3-hydroxy-L-proline dehydratase (342 aa).

Serine 90 (proton acceptor) is an active-site residue. Substrate-binding positions include 91-92 (GS), aspartate 252, and 257-258 (GT).

Belongs to the proline racemase family.

It catalyses the reaction trans-3-hydroxy-L-proline = 1-pyrroline-2-carboxylate + H2O. The catalysed reaction is trans-4-hydroxy-L-proline = cis-4-hydroxy-D-proline. In terms of biological role, catalyzes the dehydration of trans-3-hydroxy-L-proline (t3LHyp) to Delta(1)-pyrroline-2-carboxylate (Pyr2C). Can also catalyze the epimerization of trans-4-hydroxy-L-proline (t4LHyp) to cis-4-hydroxy-D-proline (c4DHyp), albeit with 30-fold lower efficiency. Is likely involved in both degradation pathways that convert t3LHyp to L-proline and t4LHyp to alpha-ketoglutarate, which would allow A.tumefaciens to grow on t3LHyp or t4LHyp as a sole carbon source. Displays no proline racemase activity. This Agrobacterium fabrum (strain C58 / ATCC 33970) (Agrobacterium tumefaciens (strain C58)) protein is Trans-3-hydroxy-L-proline dehydratase.